Reading from the N-terminus, the 183-residue chain is A-type ATP synthase subunit E (183 aa).

This sequence belongs to the V-ATPase E subunit family. Has multiple subunits with at least A(3), B(3), C, D, E, F, H, I and proteolipid K(x).

The protein localises to the cell membrane. Its function is as follows. Component of the A-type ATP synthase that produces ATP from ADP in the presence of a proton gradient across the membrane. This Methanosarcina barkeri (strain Fusaro / DSM 804) protein is A-type ATP synthase subunit E.